Consider the following 392-residue polypeptide: uncharacterized protein (392 aa).

The protein belongs to the chlamydial CPn_0675/CT_696/TC_0068 family.

This is an uncharacterized protein from Chlamydia muridarum (strain MoPn / Nigg).